Reading from the N-terminus, the 101-residue chain is Small ribosomal subunit protein uS14 (101 aa).

The segment covering 1–10 has biased composition (basic and acidic residues); the sequence is MAKNSMVERD. A disordered region spans residues 1 to 20; the sequence is MAKNSMVERDRKRRKLAQKY.

It belongs to the universal ribosomal protein uS14 family. Part of the 30S ribosomal subunit. Contacts proteins S3 and S10.

Functionally, binds 16S rRNA, required for the assembly of 30S particles and may also be responsible for determining the conformation of the 16S rRNA at the A site. The protein is Small ribosomal subunit protein uS14 of Halorhodospira halophila (strain DSM 244 / SL1) (Ectothiorhodospira halophila (strain DSM 244 / SL1)).